We begin with the raw amino-acid sequence, 425 residues long: Multifunctional CCA protein (425 aa).

The ATP site is built by Gly-8 and Arg-11. Positions 8 and 11 each coordinate CTP. 2 residues coordinate Mg(2+): Asp-21 and Asp-23. Positions 91, 141, and 144 each coordinate ATP. Residues Arg-91, Arg-141, and Arg-144 each coordinate CTP. Residues Thr-230–Ile-331 enclose the HD domain.

This sequence belongs to the tRNA nucleotidyltransferase/poly(A) polymerase family. Bacterial CCA-adding enzyme type 1 subfamily. In terms of assembly, monomer. Can also form homodimers and oligomers. Mg(2+) serves as cofactor. It depends on Ni(2+) as a cofactor.

It carries out the reaction a tRNA precursor + 2 CTP + ATP = a tRNA with a 3' CCA end + 3 diphosphate. The enzyme catalyses a tRNA with a 3' CCA end + 2 CTP + ATP = a tRNA with a 3' CCACCA end + 3 diphosphate. Catalyzes the addition and repair of the essential 3'-terminal CCA sequence in tRNAs without using a nucleic acid template. Adds these three nucleotides in the order of C, C, and A to the tRNA nucleotide-73, using CTP and ATP as substrates and producing inorganic pyrophosphate. tRNA 3'-terminal CCA addition is required both for tRNA processing and repair. Also involved in tRNA surveillance by mediating tandem CCA addition to generate a CCACCA at the 3' terminus of unstable tRNAs. While stable tRNAs receive only 3'-terminal CCA, unstable tRNAs are marked with CCACCA and rapidly degraded. This Acidovorax ebreus (strain TPSY) (Diaphorobacter sp. (strain TPSY)) protein is Multifunctional CCA protein.